A 924-amino-acid chain; its full sequence is Periplasmic nitrate reductase (924 aa).

Positions 1-30 (MNRRDFIKNTAIASAASVAGLSVPSSMLGA) form a signal peptide, tat-type signal. The region spanning 35–91 (WKWDKAVCRFCGTGCGIMIARKDGKIVATKGDPAAPVNRGLNCIKGYFNAKIMYGED) is the 4Fe-4S Mo/W bis-MGD-type domain. 4 residues coordinate [4Fe-4S] cluster: cysteine 42, cysteine 45, cysteine 49, and cysteine 77. Residues lysine 79, glutamine 147, asparagine 172, cysteine 176, 209 to 216 (WGANMAEM), methionine 417, glutamine 421, asparagine 527, 552 to 553 (SD), lysine 575, aspartate 602, and 814 to 823 (TGRVLEHWHS) contribute to the Mo-bis(molybdopterin guanine dinucleotide) site. Substrate is bound at residue tryptophan 890. Residues asparagine 898 and lysine 915 each coordinate Mo-bis(molybdopterin guanine dinucleotide).

Belongs to the prokaryotic molybdopterin-containing oxidoreductase family. NasA/NapA/NarB subfamily. Component of the periplasmic nitrate reductase NapAB complex composed of NapA and NapB. Requires [4Fe-4S] cluster as cofactor. The cofactor is Mo-bis(molybdopterin guanine dinucleotide). Predicted to be exported by the Tat system. The position of the signal peptide cleavage has not been experimentally proven.

It localises to the periplasm. It carries out the reaction 2 Fe(II)-[cytochrome] + nitrate + 2 H(+) = 2 Fe(III)-[cytochrome] + nitrite + H2O. Catalytic subunit of the periplasmic nitrate reductase complex NapAB. Receives electrons from NapB and catalyzes the reduction of nitrate to nitrite. In Campylobacter jejuni subsp. jejuni serotype O:2 (strain ATCC 700819 / NCTC 11168), this protein is Periplasmic nitrate reductase.